Here is a 443-residue protein sequence, read N- to C-terminus: UDP-N-acetylmuramate--L-alanine ligase (443 aa).

Position 110–116 (110–116 (GAHGKTS)) interacts with ATP.

Belongs to the MurCDEF family.

It localises to the cytoplasm. It carries out the reaction UDP-N-acetyl-alpha-D-muramate + L-alanine + ATP = UDP-N-acetyl-alpha-D-muramoyl-L-alanine + ADP + phosphate + H(+). Its pathway is cell wall biogenesis; peptidoglycan biosynthesis. Its function is as follows. Cell wall formation. The polypeptide is UDP-N-acetylmuramate--L-alanine ligase (Lactococcus lactis subsp. cremoris (strain MG1363)).